The chain runs to 607 residues: Transporter aclS (607 aa).

The next 12 membrane-spanning stretches (helical) occupy residues 67–87, 91–111, 152–172, 192–212, 221–241, 262–282, 317–337, 364–384, 423–443, 445–465, 500–520, and 531–551; these read LGGS…AVVL, IAAI…IGFP, LTVV…TAIL, VTTQ…PVLY, LMIG…IWSL, SLGF…SIAL, VFGQ…FGCL, AAAV…NVVD, GCYV…LASA, TFVS…GIHI, GVLP…HSIN, and HLYA…HTLV. The tract at residues 583 to 607 is disordered; sequence NKDSTEEDSDRSLRRESREVVETKV. A compositionally biased stretch (basic and acidic residues) spans 592–607; sequence DRSLRRESREVVETKV.

It belongs to the purine-cytosine permease (2.A.39) family.

The protein localises to the membrane. Its function is as follows. Transporter; part of the gene cluster that mediates the biosynthesis of aspirochlorine (or antibiotic A30641), an unusual halogenated spiro compound with distinctive antifungal properties due to selective inhibition of protein biosynthesis, and which is also active against bacteria, viruses, and murine tumor cells. The protein is Transporter aclS of Aspergillus oryzae (strain ATCC 42149 / RIB 40) (Yellow koji mold).